The primary structure comprises 218 residues: Thiopurine S-methyltransferase (218 aa).

Residues tryptophan 10, leucine 45, glutamate 66, and arginine 123 each coordinate S-adenosyl-L-methionine.

The protein belongs to the class I-like SAM-binding methyltransferase superfamily. TPMT family.

Its subcellular location is the cytoplasm. It catalyses the reaction S-adenosyl-L-methionine + a thiopurine = S-adenosyl-L-homocysteine + a thiopurine S-methylether.. The protein is Thiopurine S-methyltransferase of Shewanella denitrificans (strain OS217 / ATCC BAA-1090 / DSM 15013).